A 293-amino-acid chain; its full sequence is Single-pass membrane and coiled-coil domain-containing protein 2 (293 aa).

A coiled-coil region spans residues 116-188 (KNLLEFLLKD…SAKLRMYQME (73 aa)). A helical membrane pass occupies residues 234 to 254 (IFIMFYVLTVTGLLCYILFFG).

It localises to the membrane. The polypeptide is Single-pass membrane and coiled-coil domain-containing protein 2 (SMCO2) (Macaca fascicularis (Crab-eating macaque)).